Reading from the N-terminus, the 397-residue chain is Acetate kinase 1 (397 aa).

A Mg(2+)-binding site is contributed by Asn-8. An ATP-binding site is contributed by Lys-15. Arg-89 is a substrate binding site. The active-site Proton donor/acceptor is Asp-146. Residues 206 to 210 (HLGNG), 281 to 283 (DLR), and 329 to 333 (GIGEN) each bind ATP. Glu-382 is a Mg(2+) binding site.

It belongs to the acetokinase family. As to quaternary structure, homodimer. Requires Mg(2+) as cofactor. The cofactor is Mn(2+).

The protein localises to the cytoplasm. The catalysed reaction is acetate + ATP = acetyl phosphate + ADP. It participates in metabolic intermediate biosynthesis; acetyl-CoA biosynthesis; acetyl-CoA from acetate: step 1/2. Its function is as follows. Catalyzes the formation of acetyl phosphate from acetate and ATP. Can also catalyze the reverse reaction. The chain is Acetate kinase 1 from Listeria innocua serovar 6a (strain ATCC BAA-680 / CLIP 11262).